Consider the following 572-residue polypeptide: Phosphoenolpyruvate-protein phosphotransferase (572 aa).

H191 (tele-phosphohistidine intermediate) is an active-site residue. Positions 298 and 334 each coordinate phosphoenolpyruvate. Mg(2+) is bound by residues E433 and D457. Residues 456 to 457 (ND) and R467 each bind phosphoenolpyruvate. The active-site Proton donor is C504.

The protein belongs to the PEP-utilizing enzyme family. Homodimer. Mg(2+) serves as cofactor.

The protein localises to the cytoplasm. It catalyses the reaction L-histidyl-[protein] + phosphoenolpyruvate = N(pros)-phospho-L-histidyl-[protein] + pyruvate. General (non sugar-specific) component of the phosphoenolpyruvate-dependent sugar phosphotransferase system (sugar PTS). This major carbohydrate active-transport system catalyzes the phosphorylation of incoming sugar substrates concomitantly with their translocation across the cell membrane. Enzyme I transfers the phosphoryl group from phosphoenolpyruvate (PEP) to the phosphoryl carrier protein (HPr). The sequence is that of Phosphoenolpyruvate-protein phosphotransferase (ptsI) from Staphylococcus epidermidis (strain ATCC 35984 / DSM 28319 / BCRC 17069 / CCUG 31568 / BM 3577 / RP62A).